Here is a 415-residue protein sequence, read N- to C-terminus: 4-hydroxy-3-methylbut-2-en-1-yl diphosphate synthase (flavodoxin) (415 aa).

The [4Fe-4S] cluster site is built by Cys298, Cys301, Cys344, and Glu351.

It belongs to the IspG family. [4Fe-4S] cluster is required as a cofactor.

It catalyses the reaction (2E)-4-hydroxy-3-methylbut-2-enyl diphosphate + oxidized [flavodoxin] + H2O + 2 H(+) = 2-C-methyl-D-erythritol 2,4-cyclic diphosphate + reduced [flavodoxin]. The protein operates within isoprenoid biosynthesis; isopentenyl diphosphate biosynthesis via DXP pathway; isopentenyl diphosphate from 1-deoxy-D-xylulose 5-phosphate: step 5/6. Functionally, converts 2C-methyl-D-erythritol 2,4-cyclodiphosphate (ME-2,4cPP) into 1-hydroxy-2-methyl-2-(E)-butenyl 4-diphosphate. The protein is 4-hydroxy-3-methylbut-2-en-1-yl diphosphate synthase (flavodoxin) of Solibacter usitatus (strain Ellin6076).